The primary structure comprises 159 residues: Neuroglobin (159 aa).

Positions 3–151 constitute a Globin domain; that stretch reads KLSEKDKELI…VVAAMSQGWA (149 aa). Heme b contacts are provided by His-66 and His-98.

This sequence belongs to the globin family. In terms of assembly, monomer. Homodimers and homotetramers. Mainly monomeric but also detected as part of homodimers and homotetramers.

Its subcellular location is the cytoplasm. The protein localises to the cytosol. It localises to the mitochondrion matrix. The catalysed reaction is Fe(III)-heme b-[protein] + nitric oxide + H2O = Fe(II)-heme b-[protein] + nitrite + 2 H(+). Functionally, monomeric globin with a bis-histidyl six-coordinate heme-iron atom through which it can bind dioxygen, carbon monoxide and nitric oxide. Could help transport oxygen and increase its availability to the metabolically active neuronal tissues, though its low quantity in tissues as well as its high affinity for dioxygen, which may limit its oxygen-releasing ability, argue against it. The ferrous/deoxygenated form exhibits a nitrite reductase activity and it could produce nitric oxide which in turn inhibits cellular respiration in response to hypoxia. In its ferrous/deoxygenated state, it may also exhibit GDI (Guanine nucleotide Dissociation Inhibitor) activity toward heterotrimeric G-alpha proteins, thereby regulating signal transduction to facilitate neuroprotective responses in the wake of hypoxia and associated oxidative stress. This Dissostichus mawsoni (Antarctic cod) protein is Neuroglobin (ngb).